A 407-amino-acid chain; its full sequence is Tryptophan synthase beta chain (407 aa).

Lysine 91 carries the post-translational modification N6-(pyridoxal phosphate)lysine.

It belongs to the TrpB family. In terms of assembly, tetramer of two alpha and two beta chains. Pyridoxal 5'-phosphate serves as cofactor.

The catalysed reaction is (1S,2R)-1-C-(indol-3-yl)glycerol 3-phosphate + L-serine = D-glyceraldehyde 3-phosphate + L-tryptophan + H2O. It participates in amino-acid biosynthesis; L-tryptophan biosynthesis; L-tryptophan from chorismate: step 5/5. Its function is as follows. The beta subunit is responsible for the synthesis of L-tryptophan from indole and L-serine. This Streptococcus pneumoniae (strain Taiwan19F-14) protein is Tryptophan synthase beta chain.